A 60-amino-acid chain; its full sequence is uncharacterized protein (60 aa).

This is an uncharacterized protein from Schizosaccharomyces pombe (strain 972 / ATCC 24843) (Fission yeast).